A 175-amino-acid polypeptide reads, in one-letter code: Ribosome maturation factor RimM (175 aa).

A PRC barrel domain is found at 95–175; sequence EEGDYYWHDL…TITVDWDAGF (81 aa).

The protein belongs to the RimM family. As to quaternary structure, binds ribosomal protein uS19.

It is found in the cytoplasm. In terms of biological role, an accessory protein needed during the final step in the assembly of 30S ribosomal subunit, possibly for assembly of the head region. Essential for efficient processing of 16S rRNA. May be needed both before and after RbfA during the maturation of 16S rRNA. It has affinity for free ribosomal 30S subunits but not for 70S ribosomes. This Glaesserella parasuis serovar 5 (strain SH0165) (Haemophilus parasuis) protein is Ribosome maturation factor RimM.